Reading from the N-terminus, the 158-residue chain is MHIVEGHIEAKSAKVAIVVSRFNSFVVESLLSGAIDTLKRFGQVSEDNITVVRVPGAFELPLAAKKVAASGKFDGIIALGAVIRGGTPHFDFVAGECNKGLAQVSLEFNTPVSFGVLTTDTIEQAIERSGTKAGNKGGEAALGLLEMVNVLNAIDKEL.

Residues Phe22, 57–59 (AFE), and 81–83 (AVI) each bind 5-amino-6-(D-ribitylamino)uracil. A (2S)-2-hydroxy-3-oxobutyl phosphate-binding site is contributed by 86–87 (GT). His89 acts as the Proton donor in catalysis. Phe114 contributes to the 5-amino-6-(D-ribitylamino)uracil binding site. Arg128 provides a ligand contact to (2S)-2-hydroxy-3-oxobutyl phosphate.

Belongs to the DMRL synthase family. As to quaternary structure, forms an icosahedral capsid composed of 60 subunits, arranged as a dodecamer of pentamers.

The enzyme catalyses (2S)-2-hydroxy-3-oxobutyl phosphate + 5-amino-6-(D-ribitylamino)uracil = 6,7-dimethyl-8-(1-D-ribityl)lumazine + phosphate + 2 H2O + H(+). Its pathway is cofactor biosynthesis; riboflavin biosynthesis; riboflavin from 2-hydroxy-3-oxobutyl phosphate and 5-amino-6-(D-ribitylamino)uracil: step 1/2. Catalyzes the formation of 6,7-dimethyl-8-ribityllumazine by condensation of 5-amino-6-(D-ribitylamino)uracil with 3,4-dihydroxy-2-butanone 4-phosphate. This is the penultimate step in the biosynthesis of riboflavin. This Shewanella amazonensis (strain ATCC BAA-1098 / SB2B) protein is 6,7-dimethyl-8-ribityllumazine synthase.